Consider the following 307-residue polypeptide: Porphobilinogen deaminase (307 aa).

C239 carries the post-translational modification S-(dipyrrolylmethanemethyl)cysteine.

The protein belongs to the HMBS family. As to quaternary structure, monomer. The cofactor is dipyrromethane.

It catalyses the reaction 4 porphobilinogen + H2O = hydroxymethylbilane + 4 NH4(+). It functions in the pathway porphyrin-containing compound metabolism; protoporphyrin-IX biosynthesis; coproporphyrinogen-III from 5-aminolevulinate: step 2/4. Tetrapolymerization of the monopyrrole PBG into the hydroxymethylbilane pre-uroporphyrinogen in several discrete steps. This is Porphobilinogen deaminase from Campylobacter jejuni subsp. jejuni serotype O:23/36 (strain 81-176).